A 185-amino-acid polypeptide reads, in one-letter code: Adenylyl-sulfate kinase (185 aa).

13–20 (GLSGAGKS) contributes to the ATP binding site. Catalysis depends on serine 86, which acts as the Phosphoserine intermediate.

This sequence belongs to the APS kinase family.

The enzyme catalyses adenosine 5'-phosphosulfate + ATP = 3'-phosphoadenylyl sulfate + ADP + H(+). The protein operates within sulfur metabolism; hydrogen sulfide biosynthesis; sulfite from sulfate: step 2/3. Functionally, catalyzes the synthesis of activated sulfate. The sequence is that of Adenylyl-sulfate kinase from Myxococcus xanthus (strain DK1622).